A 177-amino-acid chain; its full sequence is Large ribosomal subunit protein uL6 (177 aa).

Belongs to the universal ribosomal protein uL6 family. Part of the 50S ribosomal subunit.

This protein binds to the 23S rRNA, and is important in its secondary structure. It is located near the subunit interface in the base of the L7/L12 stalk, and near the tRNA binding site of the peptidyltransferase center. The polypeptide is Large ribosomal subunit protein uL6 (Rickettsia akari (strain Hartford)).